A 144-amino-acid chain; its full sequence is Cytochrome c-type biogenesis protein CcmE (144 aa).

Topologically, residues 1 to 7 are cytoplasmic; it reads MTRKQKR. A helical; Signal-anchor for type II membrane protein membrane pass occupies residues 8 to 28; the sequence is LAVIGSGMGFLALAAALTFYA. Residues 29-144 lie on the Periplasmic side of the membrane; the sequence is LGQQTSYFYM…LKKDGLWQEQ (116 aa). The heme site is built by His122 and Tyr126.

Belongs to the CcmE/CycJ family.

The protein localises to the cell inner membrane. Functionally, heme chaperone required for the biogenesis of c-type cytochromes. Transiently binds heme delivered by CcmC and transfers the heme to apo-cytochromes in a process facilitated by CcmF and CcmH. The chain is Cytochrome c-type biogenesis protein CcmE from Chelativorans sp. (strain BNC1).